The primary structure comprises 741 residues: Photosystem I P700 chlorophyll a apoprotein A2 1 (741 aa).

The next 8 helical transmembrane spans lie at 46-69 (IFATHFGHLAIIFLWASSLLFHVA), 135-158 (LYTGSVFLLLFASLFLFAGWLHLQ), 175-199 (LNHHLAGLFGVSSLAWAGHLIHVAI), 273-291 (IAHHHLAIAVLFIVAGHMY), 334-357 (LHFQLGWHLACLGVVTSWVAQHMY), 373-399 (AALYTHHQYIAIFLMVGAFAHGAIFLV), 421-443 (AIISHLSWVSLFLGFHTLGLYVH), and 524-542 (FLVHHAIALGLHTTTLILV). Positions 566 and 575 each coordinate [4Fe-4S] cluster. Helical transmembrane passes span 582 to 603 (SFYLSLFWALNTVGWVTFYWHW) and 650 to 672 (LSVWAWMFLFGHLVWATGFMFLI). The chlorophyll a site is built by H661, M669, and Y677. Residue W678 coordinates phylloquinone. Residues 714 to 734 (VVGLAHFTVGYVLTYAAFLIA) traverse the membrane as a helical segment.

Belongs to the PsaA/PsaB family. The PsaA/B heterodimer binds the P700 chlorophyll special pair and subsequent electron acceptors. PSI consists of a core antenna complex that captures photons, and an electron transfer chain that converts photonic excitation into a charge separation. The cyanobacterial PSI reaction center is composed of one copy each of PsaA,B,C,D,E,F,I,J,K,L,M and X, and forms trimeric complexes. It depends on PSI electron transfer chain: 5 chlorophyll a, 1 chlorophyll a', 2 phylloquinones and 3 4Fe-4S clusters. PSI core antenna: 90 chlorophyll a, 22 carotenoids, 3 phospholipids and 1 galactolipid. P700 is a chlorophyll a/chlorophyll a' dimer, A0 is one or more chlorophyll a, A1 is one or both phylloquinones and FX is a shared 4Fe-4S iron-sulfur center. as a cofactor.

The protein resides in the cellular thylakoid membrane. It catalyses the reaction reduced [plastocyanin] + hnu + oxidized [2Fe-2S]-[ferredoxin] = oxidized [plastocyanin] + reduced [2Fe-2S]-[ferredoxin]. In terms of biological role, psaA and PsaB bind P700, the primary electron donor of photosystem I (PSI), as well as the electron acceptors A0, A1 and FX. PSI is a plastocyanin/cytochrome c6-ferredoxin oxidoreductase, converting photonic excitation into a charge separation, which transfers an electron from the donor P700 chlorophyll pair to the spectroscopically characterized acceptors A0, A1, FX, FA and FB in turn. Oxidized P700 is reduced on the lumenal side of the thylakoid membrane by plastocyanin or cytochrome c6. This is Photosystem I P700 chlorophyll a apoprotein A2 1 from Trichormus variabilis (strain ATCC 29413 / PCC 7937) (Anabaena variabilis).